Reading from the N-terminus, the 60-residue chain is Large ribosomal subunit protein uL30 (60 aa).

The protein belongs to the universal ribosomal protein uL30 family. In terms of assembly, part of the 50S ribosomal subunit.

The chain is Large ribosomal subunit protein uL30 from Dehalococcoides mccartyi (strain CBDB1).